The following is a 252-amino-acid chain: Reaction center protein L chain (252 aa).

3 helical membrane passes run 8–30, 58–86, and 91–113; these read FFGV…GAAL, GGLW…SRKL, and HVPA…RPLL. The (7R,8Z)-bacteriochlorophyll b site is built by His-128 and His-148. The helical transmembrane segment at 146–173 threads the bilayer; that stretch reads PMHMVAVTLFFTTTLALALHGSLVLAAI. His-165 contacts Fe cation. Phe-191 contributes to the a ubiquinone binding site. Residues 200 to 225 form a helical membrane-spanning segment; that stretch reads GTLGIHRLGLFLALGAGFASATCILL. His-205 contacts Fe cation.

Belongs to the reaction center PufL/M/PsbA/D family. In terms of assembly, reaction center is composed of four bacteriochlorophylls, two bacteriopheophytins, two ubiquinones, one iron, and two highly hydrophobic polypeptide chains (designated L and M).

Its subcellular location is the cell inner membrane. Functionally, the reaction center is a membrane-bound complex that mediates the initial photochemical event in the electron transfer process of photosynthesis. This Acidiphilium cryptum protein is Reaction center protein L chain (pufL).